We begin with the raw amino-acid sequence, 401 residues long: Na(+)/H(+) antiporter NhaA 2 (401 aa).

Helical transmembrane passes span 13 to 33, 59 to 79, 94 to 114, 125 to 145, 154 to 174, 178 to 198, 209 to 229, 260 to 280, 292 to 312, 332 to 352, and 363 to 383; these read AAGG…ANSP, LLLW…GLEV, ITLP…IYVW, GWAI…TIFG, LFLL…IALF, DLST…FLLN, VLIG…ATLA, WVGF…SLFG, LGIA…VCWI, GVSL…SLAF, and VKAG…VLLA.

This sequence belongs to the NhaA Na(+)/H(+) (TC 2.A.33) antiporter family.

It is found in the cell inner membrane. The enzyme catalyses Na(+)(in) + 2 H(+)(out) = Na(+)(out) + 2 H(+)(in). In terms of biological role, na(+)/H(+) antiporter that extrudes sodium in exchange for external protons. The sequence is that of Na(+)/H(+) antiporter NhaA 2 from Pseudoalteromonas atlantica (strain T6c / ATCC BAA-1087).